The primary structure comprises 37 residues: Alpha-conotoxin LvIA (37 aa).

Residues 1–20 (FRGRDAAAKASGLVGLTDRR) constitute a propeptide that is removed on maturation. 2 disulfides stabilise this stretch: Cys-22-Cys-28 and Cys-23-Cys-36. The segment at 24-26 (SHP) is ser-Xaa-Pro motif, crucial for potent interaction with nAChR. Cys-36 carries the cysteine amide modification.

It belongs to the conotoxin A superfamily. As to expression, expressed by the venom duct.

Its subcellular location is the secreted. In terms of biological role, alpha-conotoxins act on postsynaptic membranes, they bind to the nicotinic acetylcholine receptors (nAChR) and thus inhibit them. This toxin blocks alpha-3-beta-2/CHRNA3-CHRNB2 nAChR with high selectivity (IC(50)=8.67 nM (on rat) and 17.5 (on human)). Also has weaker activity on alpha-6/alpha-3-beta-2-beta-3 (CHRNA6/CHRNA3-CHRNB2-CHRNB3) (IC(50)=108 nM (on rat)), alpha-6/alpha-3-beta-4 (CHRNA6/CHRNA3-CHRNB4) (IC(50)=121 nM (on rat)), alpha-3-beta-4 (CHRNA3-CHRNB4) (IC(50)=148 nM (on rat)), and alpha-7/CHRNA7 nAChRs (IC(50)=3000 nM (on rat)). When tested on mouse with hot-plate tests, this toxin significantly increases the base pain threshold and shows analgesic effects. This Conus lividus (Livid cone) protein is Alpha-conotoxin LvIA.